Here is an 80-residue protein sequence, read N- to C-terminus: Styelin-C (80 aa).

A signal peptide spans 1-22 (MQMKATILIVLVALFMIQQSEA). 6'-bromotryptophan is present on Trp24. A Leucine amide modification is found at Leu53. Residues 55–80 (DMTDEEFQEFMQDIEQAREEELLSRQ) constitute a propeptide, removed in mature form.

The protein localises to the secreted. In terms of biological role, bactericidal against several Gram-positive and Gram-negative bacteria. This is Styelin-C from Styela clava (Sea squirt).